The primary structure comprises 343 residues: Membrane progestin receptor delta (343 aa).

Topologically, residues 1-49 are cytoplasmic; the sequence is MLSLKMPQLLRVHQVPRVFWEEGIMSGYRCPTSSALDCVLSSFQMTNET. The chain crosses the membrane as a helical span at residues 50–70; the sequence is VNIWTHFLPTWYFLWRLLALG. The Extracellular segment spans residues 71–79; sequence SPGFRADPY. A helical transmembrane segment spans residues 80–100; it reads HLPLLVFLLPACLYPFASCCA. Residues 101–112 are Cytoplasmic-facing; the sequence is HTFSSMSPRARH. Residues 113–133 form a helical membrane-spanning segment; that stretch reads ICYFLDYGALSLYSLGCAFPY. At 134-146 the chain is on the extracellular side; sequence AAYSMPASWLHSR. A helical transmembrane segment spans residues 147–167; sequence LHQLFVPAAALNSFLCTGLSC. Topologically, residues 168-216 are cytoplasmic; it reads YSRFPELEYPGFSKALRTAAFAYPFLFDNLPLFYRLRLCWGGAHSCGRD. The chain crosses the membrane as a helical span at residues 217–237; that stretch reads ALSSNHGYHLLCALLSGFLFA. The Extracellular portion of the chain corresponds to 238–257; the sequence is ARLPERLAPGRFDYIGHSHQ. A helical membrane pass occupies residues 258-278; it reads LFHICAVLGTHFQLEAVLADM. Residues 279–291 are Cytoplasmic-facing; it reads GSRRAWLAVQEPT. Residues 292–312 form a helical membrane-spanning segment; that stretch reads LGLGATVATLSLAVIGNLFII. Topologically, residues 313 to 343 are extracellular; the sequence is AAFTASLLRMPGPCPLLQGSPLEEGLQAKQQ.

This sequence belongs to the ADIPOR family. Homodimer.

The protein localises to the cell membrane. Its function is as follows. Plasma membrane progesterone (P4) receptor coupled to G proteins. Seems to act through a G(s) mediated pathway. Involved in neurosteroid inhibition of apoptosis. May be involved in regulating rapid P4 signaling in the nervous system. Also binds dehydroepiandrosterone (DHEA), pregnanolone, pregnenolone and allopregnanolone. This is Membrane progestin receptor delta from Mus musculus (Mouse).